The sequence spans 545 residues: MDFKRLTAFFAIALVIMIGWEKMFPTPKPVPAPQQAAQQQAVTASAEAALAPATPITVTTDTVQAVIDEKSGDLRRLTLLKYKATGDENKPFILFGDGKEYTYVAQSELLDAQGNNILKGIGFSAPKKQYSLEGDKVEVRLSAPETRGLKIDKVYTFTKGSYLVNVRFDIANGSGQTANLSADYRIVRDHSEPEGQGYFTHSYVGPVVYTPEGNFQKVSFSDLDDDAKSGKSEAEYIRKTPTGWLGMIEHHFMSTWILQPKGRQSVCAAGECNIDIKRRNDKLYSTSVSVPLAAIQNGAKAEASINLYAGPQTTSVIANIADNLQLAKDYGKVHWFASPLFWLLNQLHNIIGNWGWAIIVLTIIVKAVLYPLTNASYRSMAKMRAAAPKLQAIKEKYGDDRMAQQQAMMQLYTDEKINPLGGCLPMLLQIPVFIGLYWALFASVELRQAPWLGWITDLSRADPYYILPIIMAATMFAQTYLNPPPTDPMQAKMMKIMPLVFSVMFFFFPAGLVLYWVVNNLLTIAQQWHINRSIEKQRAQGEVVS.

Helical transmembrane passes span 350–370, 424–444, 461–481, and 498–518; these read IIGN…AVLY, LPML…FASV, ADPY…QTYL, and PLVF…YWVV.

It belongs to the OXA1/ALB3/YidC family. Type 1 subfamily. In terms of assembly, interacts with the Sec translocase complex via SecD. Specifically interacts with transmembrane segments of nascent integral membrane proteins during membrane integration.

It localises to the cell inner membrane. In terms of biological role, required for the insertion and/or proper folding and/or complex formation of integral membrane proteins into the membrane. Involved in integration of membrane proteins that insert both dependently and independently of the Sec translocase complex, as well as at least some lipoproteins. Aids folding of multispanning membrane proteins. This Neisseria meningitidis serogroup B (strain ATCC BAA-335 / MC58) protein is Membrane protein insertase YidC.